Consider the following 555-residue polypeptide: Urocanate hydratase (555 aa).

NAD(+) contacts are provided by residues 51–52, glutamine 129, 175–177, glutamate 195, 262–266, 272–273, and tyrosine 321; these read GG, GMG, QTSAH, and YL. Cysteine 409 is a catalytic residue. Glycine 491 contacts NAD(+).

Belongs to the urocanase family. Requires NAD(+) as cofactor.

It is found in the cytoplasm. It catalyses the reaction 4-imidazolone-5-propanoate = trans-urocanate + H2O. It participates in amino-acid degradation; L-histidine degradation into L-glutamate; N-formimidoyl-L-glutamate from L-histidine: step 2/3. Catalyzes the conversion of urocanate to 4-imidazolone-5-propionate. The sequence is that of Urocanate hydratase from Stenotrophomonas maltophilia (strain R551-3).